We begin with the raw amino-acid sequence, 523 residues long: Solute carrier family 2, facilitated glucose transporter member 2 (523 aa).

Over 1 to 10 the chain is Cytoplasmic; the sequence is MSEDKITGTL. A helical transmembrane segment spans residues 11–31; sequence AFTVFTAVLSSFQFGYDIGVI. Over 32–97 the chain is Extracellular; it reads NAPQEVIISH…SAHIVTMLWS (66 aa). The N-linked (GlcNAc...) asparagine glycan is linked to N62. The chain crosses the membrane as a helical span at residues 98–118; it reads LSVSSFAVGGMVASFFGGWLG. The Cytoplasmic segment spans residues 119–126; it reads DKLGRIKA. A helical membrane pass occupies residues 127 to 147; sequence MLAANSLSLTGALLMGCSKFG. Topologically, residues 148–157 are extracellular; the sequence is PAHALIIAGR. A helical membrane pass occupies residues 158-178; it reads SVSGLYCGLISGLVPMYIGEI. Residues 179–186 lie on the Cytoplasmic side of the membrane; it reads APTTLRGA. The helical transmembrane segment at 187 to 207 threads the bilayer; sequence LGTLHQLALVTGILISQIAGL. Q192 provides a ligand contact to D-glucose. Residues 208-216 are Extracellular-facing; it reads SFILGNQDH. A helical membrane pass occupies residues 217–237; sequence WHILLGLSAVPALLQCLLLLF. The Cytoplasmic segment spans residues 238–302; sequence CPESPRYLYI…LFTDANYRQP (65 aa). A helical transmembrane segment spans residues 303–323; sequence ILVALMLHMAQQFSGINGIFY. Residues 313–314 and N319 each bind D-glucose; that span reads QQ. Residues 324–337 lie on the Extracellular side of the membrane; it reads YSTSIFQTAGISQP. Residues 338–358 traverse the membrane as a helical segment; it reads VYATIGVGAINMIFTAVSVLL. Residue N348 participates in D-glucose binding. Residues 359–367 are Cytoplasmic-facing; that stretch reads VEKAGRRTL. Residues 368–388 traverse the membrane as a helical segment; that stretch reads FLTGMIGMFFCTIFMSVGLVL. The Extracellular portion of the chain corresponds to 389 to 401; that stretch reads LDKFAWMSYVSMT. Residues 402 to 422 form a helical membrane-spanning segment; it reads AIFLFVSFFEIGPGPIPWFMV. D-glucose is bound by residues E411 and W419. At 423–432 the chain is on the cytoplasmic side; it reads AEFFSQGPRP. A helical membrane pass occupies residues 433 to 453; it reads TALALAAFSNWVCNFVIALCF. The Extracellular portion of the chain corresponds to 454–460; that stretch reads QYIADFL. Residues 461 to 481 form a helical membrane-spanning segment; sequence GPYVFFLFAGVVLVFTLFTFF. At 482–523 the chain is on the cytoplasmic side; it reads KVPETKGKSFEEIAAEFRKKSGSAPPRKAAVQMEFLASSESV. The residue at position 522 (S522) is a Phosphoserine.

The protein belongs to the major facilitator superfamily. Sugar transporter (TC 2.A.1.1) family. Glucose transporter subfamily. N-glycosylated; required for stability and retention at the cell surface of pancreatic beta cells. As to expression, in embryo, expressed in endoderm layer of yolk sac and liver primordium.

Its subcellular location is the cell membrane. The enzyme catalyses D-glucose(out) = D-glucose(in). It carries out the reaction D-fructose(out) = D-fructose(in). The catalysed reaction is L-dehydroascorbate(out) = L-dehydroascorbate(in). It catalyses the reaction D-galactose(in) = D-galactose(out). Its activity is regulated as follows. D-glucose and maltose competitively inhibit fructose transport. D-glucose, D-fructose and maltose inhibit deoxyglucose transport. Functionally, facilitative hexose transporter that mediates the transport of glucose, fructose and galactose. Likely mediates the bidirectional transfer of glucose across the plasma membrane of hepatocytes and is responsible for uptake of glucose by the beta cells; may comprise part of the glucose-sensing mechanism of the beta cell. May also participate with the Na(+)/glucose cotransporter in the transcellular transport of glucose in the small intestine and kidney. Also able to mediate the transport of dehydroascorbate. This chain is Solute carrier family 2, facilitated glucose transporter member 2, found in Mus musculus (Mouse).